We begin with the raw amino-acid sequence, 774 residues long: MEEEPLLAGSINQGSGDYGAHSESCLHYPDEHTPRSRRLSYSVTDDSCNVEEDADADLYVQQAVVFIEDAIKYRSINHRVDSGSLRLYRWYYSNLCQWGLGLTIAVVLALAFIERPSSLTYTSDIRVKPKPWEPPCGMTEGIEIVCLCIFILDVTAKGYLIGWEEFRMNKWLLAYLIVITASVIDWMLSISMLCDENLRVRRLIRPFFLLQNSSLMKKTLKCIKRTLPEIASVILLLALHICLFTMIGMLIFAKSDDPKQNGEWQTYFRNLPKALSSLLVLLTTANNPDVMIPAYSLNRGYSIFFILFSVFGTYLLMNLMTAIIYNQFRGYLLMSVQTSIIRRRLGIRAAFEVLCCPGRGHTSTQAEGHVERVAVSMFLKVMERVHMKSYCRQAIVKAARRFPDGFISGEDFQRLFNELDKDFVKEHPPKPEYSSSGLQHIQYVYSHYYISVLGNAVALANVICICTVLVLNAEKSASEKNYFYMEIINCIFILYYLIEMLLKIVAFGWKGYLSYRNNIFDGFLTVLLLAIQIVIFITFKIPYVDVDPVPRHVMALWEMIRLVNMLIVFRFLRIIPEIKLMAVVASTIVDLVKNLRAFAGILLVVYYMFAVLGIWLFQGAISPPSNMSLVSNSSLENITGPYSMECGTFEQLEYWPNNFDDFASSLILLYNIMVVNNWHVFTDAYARYTTDWSLVYFVVWWLTSSVMWVNLFVALILENFTYKWDRSNGLSVEDVERIAYQSTVQLMFKEHVKEPTEEELLAQLHQHPHLHLSW.

The Cytoplasmic segment spans residues 1–92 (MEEEPLLAGS…GSLRLYRWYY (92 aa)). A helical membrane pass occupies residues 93-113 (SNLCQWGLGLTIAVVLALAFI). The Extracellular portion of the chain corresponds to 114-140 (ERPSSLTYTSDIRVKPKPWEPPCGMTE). Residues 141–161 (GIEIVCLCIFILDVTAKGYLI) form a helical membrane-spanning segment. Residues 162 to 170 (GWEEFRMNK) lie on the Cytoplasmic side of the membrane. The helical transmembrane segment at 171–191 (WLLAYLIVITASVIDWMLSIS) threads the bilayer. Topologically, residues 192 to 197 (MLCDEN) are extracellular. A helical membrane pass occupies residues 198–218 (LRVRRLIRPFFLLQNSSLMKK). Residues 217–221 (KKTLK) form an interaction with phosphatidylinositol 3,5-bisphosphate region. The Cytoplasmic segment spans residues 219–232 (TLKCIKRTLPEIAS). Residues 233–253 (VILLLALHICLFTMIGMLIFA) form a helical membrane-spanning segment. Residues 254–267 (KSDDPKQNGEWQTY) are Extracellular-facing. The segment at residues 268-292 (FRNLPKALSSLLVLLTTANNPDVMI) is an intramembrane region (helical; Pore-forming). The Extracellular segment spans residues 293 to 302 (PAYSLNRGYS). The chain crosses the membrane as a helical span at residues 303–323 (IFFILFSVFGTYLLMNLMTAI). Residues 324 to 452 (IYNQFRGYLL…YVYSHYYISV (129 aa)) are Cytoplasmic-facing. The helical transmembrane segment at 453-475 (LGNAVALANVICICTVLVLNAEK) threads the bilayer. Residues 476–486 (SASEKNYFYME) lie on the Extracellular side of the membrane. The chain crosses the membrane as a helical span at residues 487 to 507 (IINCIFILYYLIEMLLKIVAF). Residues 508–518 (GWKGYLSYRNN) lie on the Cytoplasmic side of the membrane. A helical membrane pass occupies residues 519 to 539 (IFDGFLTVLLLAIQIVIFITF). The Extracellular portion of the chain corresponds to 540–564 (KIPYVDVDPVPRHVMALWEMIRLVN). A helical membrane pass occupies residues 565–585 (MLIVFRFLRIIPEIKLMAVVA). The Cytoplasmic segment spans residues 586 to 596 (STIVDLVKNLR). Residues 597–617 (AFAGILLVVYYMFAVLGIWLF) traverse the membrane as a helical segment. At 618–658 (QGAISPPSNMSLVSNSSLENITGPYSMECGTFEQLEYWPNN) the chain is on the extracellular side. N-linked (GlcNAc...) asparagine glycans are attached at residues Asn626, Asn632, and Asn637. An intramembrane region (helical; Pore-forming) is located at residues 659–681 (FDDFASSLILLYNIMVVNNWHVF). Residues 682-696 (TDAYARYTTDWSLVY) are Extracellular-facing. A helical transmembrane segment spans residues 697–717 (FVVWWLTSSVMWVNLFVALIL). Residues 718 to 774 (ENFTYKWDRSNGLSVEDVERIAYQSTVQLMFKEHVKEPTEEELLAQLHQHPHLHLSW) lie on the Cytoplasmic side of the membrane.

The protein belongs to the calcium channel alpha-1 subunit (TC 1.A.1.11) family. Two pore calcium channel subfamily. In terms of assembly, homodimer. N-glycosylated.

Its subcellular location is the late endosome membrane. The protein localises to the lysosome membrane. The catalysed reaction is Na(+)(in) = Na(+)(out). The enzyme catalyses Ca(2+)(in) = Ca(2+)(out). In terms of biological role, intracellular channel initially characterized as a non-selective Ca(2+)-permeable channel activated by NAADP (nicotinic acid adenine dinucleotide phosphate), it is also a highly-selective Na(+) channel activated directly by PI(3,5)P2 (phosphatidylinositol 3,5-bisphosphate). Localizes to the lysosomal and late endosome membranes where it regulates organellar membrane excitability, membrane trafficking, and pH homeostasis. The protein is Two pore channel protein 2 (tpcn2) of Danio rerio (Zebrafish).